The primary structure comprises 449 residues: Kynurenine 3-monooxygenase (449 aa).

Belongs to the aromatic-ring hydroxylase family. KMO subfamily. FAD serves as cofactor.

It carries out the reaction L-kynurenine + NADPH + O2 + H(+) = 3-hydroxy-L-kynurenine + NADP(+) + H2O. The protein operates within cofactor biosynthesis; NAD(+) biosynthesis; quinolinate from L-kynurenine: step 1/3. Catalyzes the hydroxylation of L-kynurenine (L-Kyn) to form 3-hydroxy-L-kynurenine (L-3OHKyn). Required for synthesis of quinolinic acid. This chain is Kynurenine 3-monooxygenase, found in Cytophaga hutchinsonii (strain ATCC 33406 / DSM 1761 / CIP 103989 / NBRC 15051 / NCIMB 9469 / D465).